The sequence spans 263 residues: Endonuclease 8 (263 aa).

The active-site Schiff-base intermediate with DNA is the proline 2. Glutamate 3 functions as the Proton donor in the catalytic mechanism. Lysine 53 acts as the Proton donor; for beta-elimination activity in catalysis. 3 residues coordinate DNA: glutamine 70, arginine 125, and asparagine 169. The FPG-type zinc-finger motif lies at 229-263 (KVFHRDGELCERCGGIIEKTTLSSRPFYWCPGCQH). The active-site Proton donor; for delta-elimination activity is the arginine 253.

The protein belongs to the FPG family. It depends on Zn(2+) as a cofactor.

It carries out the reaction 2'-deoxyribonucleotide-(2'-deoxyribose 5'-phosphate)-2'-deoxyribonucleotide-DNA = a 3'-end 2'-deoxyribonucleotide-(2,3-dehydro-2,3-deoxyribose 5'-phosphate)-DNA + a 5'-end 5'-phospho-2'-deoxyribonucleoside-DNA + H(+). Involved in base excision repair of DNA damaged by oxidation or by mutagenic agents. Acts as a DNA glycosylase that recognizes and removes damaged bases. Has a preference for oxidized pyrimidines, such as thymine glycol, 5,6-dihydrouracil and 5,6-dihydrothymine. Has AP (apurinic/apyrimidinic) lyase activity and introduces nicks in the DNA strand. Cleaves the DNA backbone by beta-delta elimination to generate a single-strand break at the site of the removed base with both 3'- and 5'-phosphates. The polypeptide is Endonuclease 8 (Shigella boydii serotype 4 (strain Sb227)).